The chain runs to 129 residues: Histone H2A type 2-C (129 aa).

Residues 1 to 22 (MSGRGKQGGKARAKAKSRSSRA) form a disordered region. S2 carries the post-translational modification N-acetylserine. S2 is modified (phosphoserine; by RPS6KA5). R4 carries the citrulline; alternate modification. R4 carries the post-translational modification Symmetric dimethylarginine; by PRMT5; alternate. N6-(2-hydroxyisobutyryl)lysine; alternate occurs at positions 6 and 10. K6 carries the N6-acetyllysine; alternate modification. Basic residues predominate over residues 7 to 19 (QGGKARAKAKSRS). An N6-lactoyllysine; alternate modification is found at K10. The residue at position 10 (K10) is an N6-succinyllysine; alternate. Glycyl lysine isopeptide (Lys-Gly) (interchain with G-Cter in ubiquitin) cross-links involve residues K14 and K16. Residue K37 is modified to N6-(2-hydroxyisobutyryl)lysine; alternate. At K37 the chain carries N6-(beta-hydroxybutyryl)lysine; alternate. The residue at position 37 (K37) is an N6-crotonyllysine; alternate. 2 positions are modified to N6-(2-hydroxyisobutyryl)lysine: K75 and K76. Residue K96 is modified to N6-(2-hydroxyisobutyryl)lysine; alternate. K96 bears the N6-succinyllysine; alternate mark. K96 bears the N6-glutaryllysine; alternate mark. The residue at position 100 (K100) is an N6-glutaryllysine. Q105 is subject to N5-methylglutamine. K119 is modified (N6-(2-hydroxyisobutyryl)lysine; alternate). 2 positions are modified to N6-crotonyllysine; alternate: K119 and K120. 2 positions are modified to N6-glutaryllysine; alternate: K119 and K120. K120 participates in a covalent cross-link: Glycyl lysine isopeptide (Lys-Gly) (interchain with G-Cter in ubiquitin); alternate. T121 is subject to Phosphothreonine; by DCAF1. Phosphoserine is present on S123. Position 125 is an N6-crotonyllysine (K125).

This sequence belongs to the histone H2A family. The nucleosome is a histone octamer containing two molecules each of H2A, H2B, H3 and H4 assembled in one H3-H4 heterotetramer and two H2A-H2B heterodimers. The octamer wraps approximately 147 bp of DNA. Deiminated on Arg-4 in granulocytes upon calcium entry. In terms of processing, monoubiquitination of Lys-120 (H2AK119Ub) by RING1, TRIM37 and RNF2/RING2 complex gives a specific tag for epigenetic transcriptional repression and participates in X chromosome inactivation of female mammals. It is involved in the initiation of both imprinted and random X inactivation. Ubiquitinated H2A is enriched in inactive X chromosome chromatin. Ubiquitination of H2A functions downstream of methylation of 'Lys-27' of histone H3 (H3K27me). H2AK119Ub by RNF2/RING2 can also be induced by ultraviolet and may be involved in DNA repair. Following DNA double-strand breaks (DSBs), it is ubiquitinated through 'Lys-63' linkage of ubiquitin moieties by the E2 ligase UBE2N and the E3 ligases RNF8 and RNF168, leading to the recruitment of repair proteins to sites of DNA damage. Ubiquitination at Lys-14 and Lys-16 (H2AK13Ub and H2AK15Ub, respectively) in response to DNA damage is initiated by RNF168 that mediates monoubiquitination at these 2 sites, and 'Lys-63'-linked ubiquitin are then conjugated to monoubiquitin; RNF8 is able to extend 'Lys-63'-linked ubiquitin chains in vitro. H2AK119Ub and ionizing radiation-induced 'Lys-63'-linked ubiquitination (H2AK13Ub and H2AK15Ub) are distinct events. Post-translationally, phosphorylation on Ser-2 (H2AS1ph) is enhanced during mitosis. Phosphorylation on Ser-2 by RPS6KA5/MSK1 directly represses transcription. Acetylation of H3 inhibits Ser-2 phosphorylation by RPS6KA5/MSK1. Phosphorylation at Thr-121 (H2AT120ph) by DCAF1 is present in the regulatory region of many tumor suppresor genes and down-regulates their transcription. Symmetric dimethylation on Arg-4 by the PRDM1/PRMT5 complex may play a crucial role in the germ-cell lineage. In terms of processing, glutamine methylation at Gln-105 (H2AQ104me) by FBL is specifically dedicated to polymerase I. It is present at 35S ribosomal DNA locus and impairs binding of the FACT complex. Post-translationally, crotonylation (Kcr) is specifically present in male germ cells and marks testis-specific genes in post-meiotic cells, including X-linked genes that escape sex chromosome inactivation in haploid cells. Crotonylation marks active promoters and enhancers and confers resistance to transcriptional repressors. It is also associated with post-meiotically activated genes on autosomes. Lactylated in macrophages by EP300/P300 by using lactoyl-CoA directly derived from endogenous or exogenous lactate, leading to stimulates gene transcription.

The protein localises to the nucleus. It localises to the chromosome. Functionally, core component of nucleosome. Nucleosomes wrap and compact DNA into chromatin, limiting DNA accessibility to the cellular machineries which require DNA as a template. Histones thereby play a central role in transcription regulation, DNA repair, DNA replication and chromosomal stability. DNA accessibility is regulated via a complex set of post-translational modifications of histones, also called histone code, and nucleosome remodeling. The sequence is that of Histone H2A type 2-C from Bos taurus (Bovine).